The sequence spans 259 residues: Pimeloyl-[acyl-carrier protein] methyl ester esterase (259 aa).

Substrate contacts are provided by residues W18, 78–79 (SL), and 139–143 (FLALD). Catalysis depends on S78, which acts as the Nucleophile. Active-site residues include D203 and H231. Position 231 (H231) interacts with substrate.

The protein belongs to the AB hydrolase superfamily. Carboxylesterase BioH family. As to quaternary structure, monomer.

It is found in the cytoplasm. It carries out the reaction 6-carboxyhexanoyl-[ACP] methyl ester + H2O = 6-carboxyhexanoyl-[ACP] + methanol + H(+). The protein operates within cofactor biosynthesis; biotin biosynthesis. Its function is as follows. The physiological role of BioH is to remove the methyl group introduced by BioC when the pimeloyl moiety is complete. It allows to synthesize pimeloyl-ACP via the fatty acid synthetic pathway through the hydrolysis of the ester bonds of pimeloyl-ACP esters. This Stenotrophomonas maltophilia (strain R551-3) protein is Pimeloyl-[acyl-carrier protein] methyl ester esterase.